Consider the following 286-residue polypeptide: Thymidylate synthase (286 aa).

140–141 (RR) is a binding site for dUMP. Residue C161 is the Nucleophile of the active site. DUMP contacts are provided by residues 185-188 (RSND), N196, and 226-228 (HIY). D188 provides a ligand contact to (6R)-5,10-methylene-5,6,7,8-tetrahydrofolate. Residue A285 coordinates (6R)-5,10-methylene-5,6,7,8-tetrahydrofolate.

This sequence belongs to the thymidylate synthase family. Bacterial-type ThyA subfamily. Homodimer.

The protein localises to the cytoplasm. The catalysed reaction is dUMP + (6R)-5,10-methylene-5,6,7,8-tetrahydrofolate = 7,8-dihydrofolate + dTMP. The protein operates within pyrimidine metabolism; dTTP biosynthesis. In terms of biological role, catalyzes the reductive methylation of 2'-deoxyuridine-5'-monophosphate (dUMP) to 2'-deoxythymidine-5'-monophosphate (dTMP) while utilizing 5,10-methylenetetrahydrofolate (mTHF) as the methyl donor and reductant in the reaction, yielding dihydrofolate (DHF) as a by-product. This enzymatic reaction provides an intracellular de novo source of dTMP, an essential precursor for DNA biosynthesis. The chain is Thymidylate synthase from Streptococcus thermophilus (strain CNRZ 1066).